Consider the following 173-residue polypeptide: Ribosome maturation factor RimM (173 aa).

Residues 96–169 form the PRC barrel domain; that stretch reads PDEFYDHQLE…LITIDPPDGL (74 aa).

This sequence belongs to the RimM family. Binds ribosomal protein uS19.

It localises to the cytoplasm. In terms of biological role, an accessory protein needed during the final step in the assembly of 30S ribosomal subunit, possibly for assembly of the head region. Essential for efficient processing of 16S rRNA. May be needed both before and after RbfA during the maturation of 16S rRNA. It has affinity for free ribosomal 30S subunits but not for 70S ribosomes. The chain is Ribosome maturation factor RimM from Mycolicibacterium gilvum (strain PYR-GCK) (Mycobacterium gilvum (strain PYR-GCK)).